Here is a 453-residue protein sequence, read N- to C-terminus: MGLPIVAIIGRPNVGKSTLVNRLAGEQTAIVHDEPGVTRDRTYLPAYWSDREFQVVDTGGLVFNDDTEFLPLIRQQALAALHEASAAIFVVNGQTGPNSADEEIAEWLRQQPVPVFLAVNKCESPDQGSIQASEFWELGLGEPYPISAIHGNGTGELLDELIKHLPPVTELEENNEIKIAIIGRPNVGKSSLLNAFAGEERVIVSPISGTTRDAIDTFIERDGQNYRLIDTAGIRKKKSIDYGTEFFSINRAFKAIRRADVVLLVIDALDGVTEQDQKLAGRILDEGKACVVVVNKWDAVEKDSYTIYDYEKNLEARLHFTEWADTIYVSAVTGQRVEKILELVTKANEEHKRRVSTSVINEVLEDAVRWHSPPTSRGGRQGRIYYGTQVSTQPPTIALFVNEAKRFNDNYRRYIERQFRQQLGFKGTPIRLLWRSKKVRDVESGSANRATRV.

EngA-type G domains lie at 4–169 (PIVA…PPVT) and 177–352 (IKIA…EEHK). GTP contacts are provided by residues 10 to 17 (GRPNVGKS), 57 to 61 (DTGGL), 120 to 123 (NKCE), 183 to 190 (GRPNVGKS), 230 to 234 (DTAGI), and 295 to 298 (NKWD). In terms of domain architecture, KH-like spans 353-438 (RRVSTSVINE…PIRLLWRSKK (86 aa)).

This sequence belongs to the TRAFAC class TrmE-Era-EngA-EngB-Septin-like GTPase superfamily. EngA (Der) GTPase family. Associates with the 50S ribosomal subunit.

Functionally, GTPase that plays an essential role in the late steps of ribosome biogenesis. The chain is GTPase Der from Nostoc sp. (strain PCC 7120 / SAG 25.82 / UTEX 2576).